A 598-amino-acid chain; its full sequence is Arginine--tRNA ligase (598 aa).

The short motif at 140–150 is the 'HIGH' region element; that stretch reads ANPTGPLHVGH.

This sequence belongs to the class-I aminoacyl-tRNA synthetase family. As to quaternary structure, monomer.

It localises to the cytoplasm. The enzyme catalyses tRNA(Arg) + L-arginine + ATP = L-arginyl-tRNA(Arg) + AMP + diphosphate. The chain is Arginine--tRNA ligase from Synechococcus sp. (strain JA-3-3Ab) (Cyanobacteria bacterium Yellowstone A-Prime).